The sequence spans 185 residues: Ribosome-recycling factor (185 aa).

Belongs to the RRF family.

It localises to the cytoplasm. Functionally, responsible for the release of ribosomes from messenger RNA at the termination of protein biosynthesis. May increase the efficiency of translation by recycling ribosomes from one round of translation to another. The sequence is that of Ribosome-recycling factor from Clostridium botulinum (strain Alaska E43 / Type E3).